Here is a 217-residue protein sequence, read N- to C-terminus: Ribosome maturation factor RimM (217 aa).

The region spanning 115–186 is the PRC barrel domain; that stretch reads EDAWYDNQLV…TVTLTPPPGL (72 aa). The segment at 181–217 is disordered; the sequence is TPPPGLFEDLPDDAPAAGDESEPVSPPVTAEETPGGE.

Belongs to the RimM family. As to quaternary structure, binds ribosomal protein uS19.

The protein resides in the cytoplasm. An accessory protein needed during the final step in the assembly of 30S ribosomal subunit, possibly for assembly of the head region. Essential for efficient processing of 16S rRNA. May be needed both before and after RbfA during the maturation of 16S rRNA. It has affinity for free ribosomal 30S subunits but not for 70S ribosomes. The protein is Ribosome maturation factor RimM of Leifsonia xyli subsp. xyli (strain CTCB07).